Reading from the N-terminus, the 276-residue chain is Undecaprenyl-diphosphatase (276 aa).

7 helical membrane passes run 40-60 (GLAFDTILHIGTLVAIFTFFW), 98-118 (WLIIVGTIPTGIMGILLKDAI), 121-141 (IFRGTLFVGIFLLVTAAVLYY), 155-175 (MSFKQALIVGICQGLAVFPGI), 200-220 (FLLSIPAVIGAGLIQIKDIAT), 227-247 (VLLAGFISSVIFGYLSIKLLM), and 255-275 (LDIFAYYCTIIGIITIILSVV).

The protein belongs to the UppP family.

The protein resides in the cell membrane. It catalyses the reaction di-trans,octa-cis-undecaprenyl diphosphate + H2O = di-trans,octa-cis-undecaprenyl phosphate + phosphate + H(+). Catalyzes the dephosphorylation of undecaprenyl diphosphate (UPP). The polypeptide is Undecaprenyl-diphosphatase (Methanosphaera stadtmanae (strain ATCC 43021 / DSM 3091 / JCM 11832 / MCB-3)).